The chain runs to 418 residues: Putative methylthiotransferase jhp_0270 (418 aa).

The 109-residue stretch at 2-110 folds into the MTTase N-terminal domain; that stretch reads KKVYFKTFGC…INALLQEKKR (109 aa). The [4Fe-4S] cluster site is built by Cys11, Cys45, Cys74, Cys144, Cys148, and Cys151. The region spanning 130-355 is the Radical SAM core domain; sequence FVGKTRAFIK…KDLIFHKNKA (226 aa).

The protein belongs to the methylthiotransferase family. The cofactor is [4Fe-4S] cluster.

This chain is Putative methylthiotransferase jhp_0270, found in Helicobacter pylori (strain J99 / ATCC 700824) (Campylobacter pylori J99).